The primary structure comprises 183 residues: Protein Dr1 (183 aa).

The Histone-fold domain occupies 19-82 (TLPRASINKI…INAEHVLEAL (64 aa)). The segment at 92–183 (QEAEAVLHDC…DDDDDDDDDY (92 aa)) is repression of TATA-containing promoters. A disordered region spans residues 155–183 (AMVQRPPLADGSVASKPSEDDDDDDDDDY). Residues 173 to 183 (EDDDDDDDDDY) show a composition bias toward acidic residues.

It belongs to the NC2 beta/DR1 family. In terms of assembly, component of the Ada2a-containing (ATAC) complex composed of at least Ada2a, Atac1, Hcf, Ada3, Gcn5, Mocs2B, Charac-14, Atac3, Atac2, NC2beta and wds. Homodimer. Interacts with NC2-alpha/Drap1 to form the dNC2 complex.

The protein resides in the nucleus. Functionally, bifunctional basic transcription factor. Activates transcription of DPE (Downstream Promoter Element) containing promoters while repressing transcription of promoters which contain TATA elements. Together with Chrac-14, promotes nucleosome sliding of ATP-dependent nucleosome remodeling complexes. This is Protein Dr1 (NC2beta) from Drosophila melanogaster (Fruit fly).